The sequence spans 246 residues: Putative S-adenosyl-L-methionine-dependent methyltransferase Mflv_0168 (246 aa).

Residues Asp-112 and 141–142 (DL) contribute to the S-adenosyl-L-methionine site.

Belongs to the UPF0677 family.

Exhibits S-adenosyl-L-methionine-dependent methyltransferase activity. The polypeptide is Putative S-adenosyl-L-methionine-dependent methyltransferase Mflv_0168 (Mycolicibacterium gilvum (strain PYR-GCK) (Mycobacterium gilvum (strain PYR-GCK))).